Reading from the N-terminus, the 448-residue chain is MTARSSLTIVLAAGEGTRMRSSLPKVLHPIAGESMLAHVLAAAPQGDGAAIAVVIGPGHDAVEKEAKRLCPDVAIFVQRERLGTAHAVLAAREAIARGADDLLVAFGDTPLITAETFARLRAALAQGAALAVLGFRAVDPTGYGRLLLDGSKLVAIREHADASEAERAITLCNAGVMAMDGRRALAILDKIGNTNSKGEYYLVDAVAIARSQGLDAVVIETSEDEVRGINTKAQLAQAEAAMQARLRQAAMDAGVTLIAPETVYLAADTTFGRDVTIEPFVVIGPGVSIGDGAVVHSFSHVVQSKLGSNTLLGPFARLRPGTSLGDGAKIGNFVEAKAAVLEPGVKVNHLSYIGDAHVGAHSNIGAGTITCNYDGFNKHKTRIGEGAFIGTNTSLVAPINIGARAYIGSGSVITRDVPDDALALERSPQTTKEGAAARFRNAKLRQTK.

The pyrophosphorylase stretch occupies residues 1–232; the sequence is MTARSSLTIV…EDEVRGINTK (232 aa). UDP-N-acetyl-alpha-D-glucosamine-binding positions include 11–14, Lys25, Gln78, and 83–84; these read LAAG and GT. Asp108 serves as a coordination point for Mg(2+). Residues Gly144, Glu158, Asn173, and Asn230 each coordinate UDP-N-acetyl-alpha-D-glucosamine. Asn230 contributes to the Mg(2+) binding site. The tract at residues 233–253 is linker; sequence AQLAQAEAAMQARLRQAAMDA. The interval 254–448 is N-acetyltransferase; it reads GVTLIAPETV…FRNAKLRQTK (195 aa). UDP-N-acetyl-alpha-D-glucosamine contacts are provided by Arg319 and Lys337. The Proton acceptor role is filled by His349. Residues Tyr352 and Asn363 each coordinate UDP-N-acetyl-alpha-D-glucosamine. Acetyl-CoA-binding positions include Ala366, 372–373, Ser409, and Arg426; that span reads NY. The disordered stretch occupies residues 427-448; it reads SPQTTKEGAAARFRNAKLRQTK.

The protein in the N-terminal section; belongs to the N-acetylglucosamine-1-phosphate uridyltransferase family. In the C-terminal section; belongs to the transferase hexapeptide repeat family. In terms of assembly, homotrimer. Mg(2+) is required as a cofactor.

Its subcellular location is the cytoplasm. The enzyme catalyses alpha-D-glucosamine 1-phosphate + acetyl-CoA = N-acetyl-alpha-D-glucosamine 1-phosphate + CoA + H(+). It catalyses the reaction N-acetyl-alpha-D-glucosamine 1-phosphate + UTP + H(+) = UDP-N-acetyl-alpha-D-glucosamine + diphosphate. Its pathway is nucleotide-sugar biosynthesis; UDP-N-acetyl-alpha-D-glucosamine biosynthesis; N-acetyl-alpha-D-glucosamine 1-phosphate from alpha-D-glucosamine 6-phosphate (route II): step 2/2. The protein operates within nucleotide-sugar biosynthesis; UDP-N-acetyl-alpha-D-glucosamine biosynthesis; UDP-N-acetyl-alpha-D-glucosamine from N-acetyl-alpha-D-glucosamine 1-phosphate: step 1/1. It participates in bacterial outer membrane biogenesis; LPS lipid A biosynthesis. In terms of biological role, catalyzes the last two sequential reactions in the de novo biosynthetic pathway for UDP-N-acetylglucosamine (UDP-GlcNAc). The C-terminal domain catalyzes the transfer of acetyl group from acetyl coenzyme A to glucosamine-1-phosphate (GlcN-1-P) to produce N-acetylglucosamine-1-phosphate (GlcNAc-1-P), which is converted into UDP-GlcNAc by the transfer of uridine 5-monophosphate (from uridine 5-triphosphate), a reaction catalyzed by the N-terminal domain. The protein is Bifunctional protein GlmU of Bradyrhizobium sp. (strain ORS 278).